The primary structure comprises 503 residues: Aromatase (503 aa).

A run of 2 helical transmembrane segments spans residues 19–39 (EAMP…LLVW) and 303–323 (MLIA…FLIA). Substrate is bound by residues aspartate 309 and methionine 374. Cysteine 437 provides a ligand contact to heme.

This sequence belongs to the cytochrome P450 family. Requires heme as cofactor. Post-translationally, phosphorylated in vitro by PKA and PKG/PRKG1. These phosphorylations inhibit the catalytic activity as measured by estrone synthesis from androstenedione (36% decrease for PKA and 30% for PKG/PRKG1). Widely expressed, including in adult and fetal brain, placenta, skin fibroblasts, adipose tissue and gonads.

Its subcellular location is the endoplasmic reticulum membrane. It localises to the microsome membrane. It carries out the reaction testosterone + 3 reduced [NADPH--hemoprotein reductase] + 3 O2 = 17beta-estradiol + formate + 3 oxidized [NADPH--hemoprotein reductase] + 4 H2O + 4 H(+). The enzyme catalyses androst-4-ene-3,17-dione + 3 reduced [NADPH--hemoprotein reductase] + 3 O2 = estrone + formate + 3 oxidized [NADPH--hemoprotein reductase] + 4 H2O + 4 H(+). The catalysed reaction is androst-4-ene-3,17-dione + reduced [NADPH--hemoprotein reductase] + O2 = 19-hydroxyandrost-4-ene-3,17-dione + oxidized [NADPH--hemoprotein reductase] + H2O + H(+). It catalyses the reaction 19-hydroxyandrost-4-ene-3,17-dione + reduced [NADPH--hemoprotein reductase] + O2 = 19-oxo-androst-4-ene-3,17-dione + oxidized [NADPH--hemoprotein reductase] + 2 H2O + H(+). It carries out the reaction 19-oxo-androst-4-ene-3,17-dione + reduced [NADPH--hemoprotein reductase] + O2 = estrone + formate + oxidized [NADPH--hemoprotein reductase] + H2O + 2 H(+). The enzyme catalyses estrone + reduced [NADPH--hemoprotein reductase] + O2 = 2-hydroxyestrone + oxidized [NADPH--hemoprotein reductase] + H2O + H(+). The catalysed reaction is 17beta-hydroxy-5alpha-androstan-3-one + reduced [NADPH--hemoprotein reductase] + O2 = 17beta,19-dihydroxy-3-oxo-5alpha-androstanone + oxidized [NADPH--hemoprotein reductase] + H2O + H(+). It catalyses the reaction 17beta,19-dihydroxy-3-oxo-5alpha-androstanone + reduced [NADPH--hemoprotein reductase] + O2 = 17beta-hydroxy-3,19-dioxo-5alpha-androstanone + oxidized [NADPH--hemoprotein reductase] + 2 H2O + H(+). It carries out the reaction 17beta-hydroxy-3,19-dioxo-5alpha-androstanone + reduced [NADPH--hemoprotein reductase] + O2 = 17beta-hydroxy-3-oxo-19-nor-5alpha-androst-1-ene + formate + oxidized [NADPH--hemoprotein reductase] + H2O + 2 H(+). The protein operates within steroid hormone biosynthesis. Functionally, a cytochrome P450 monooxygenase that catalyzes the conversion of C19 androgens, androst-4-ene-3,17-dione (androstenedione) and testosterone to the C18 estrogens, estrone and estradiol, respectively. Catalyzes three successive oxidations of C19 androgens: two conventional oxidations at C19 yielding 19-hydroxy and 19-oxo/19-aldehyde derivatives, followed by a third oxidative aromatization step that involves C1-beta hydrogen abstraction combined with cleavage of the C10-C19 bond to yield a phenolic A ring and formic acid. Alternatively, the third oxidative reaction yields a 19-norsteroid and formic acid. Converts dihydrotestosterone to delta1,10-dehydro 19-nordihydrotestosterone and may play a role in homeostasis of this potent androgen. Also displays 2-hydroxylase activity toward estrone. Mechanistically, uses molecular oxygen inserting one oxygen atom into a substrate, and reducing the second into a water molecule, with two electrons provided by NADPH via cytochrome P450 reductase (CPR; NADPH-ferrihemoprotein reductase). This chain is Aromatase, found in Homo sapiens (Human).